We begin with the raw amino-acid sequence, 354 residues long: Probable cinnamyl alcohol dehydrogenase 1 (354 aa).

Cysteine 47 contributes to the Zn(2+) binding site. Serine 49 is a binding site for NADP(+). 7 residues coordinate Zn(2+): histidine 69, glutamate 70, cysteine 100, cysteine 103, cysteine 106, cysteine 114, and cysteine 163. NADP(+)-binding positions include threonine 167, 188–193 (GLGGVG), 211–216 (SSSDKK), threonine 251, glycine 275, and 296–298 (SFI).

It belongs to the zinc-containing alcohol dehydrogenase family. In terms of assembly, homodimer. It depends on Zn(2+) as a cofactor.

It carries out the reaction (E)-cinnamyl alcohol + NADP(+) = (E)-cinnamaldehyde + NADPH + H(+). The catalysed reaction is (E)-coniferol + NADP(+) = (E)-coniferaldehyde + NADPH + H(+). The enzyme catalyses (E)-sinapyl alcohol + NADP(+) = (E)-sinapaldehyde + NADPH + H(+). It catalyses the reaction (E)-4-coumaroyl alcohol + NADP(+) = (E)-4-coumaraldehyde + NADPH + H(+). It carries out the reaction (E)-caffeyl alcohol + NADP(+) = (E)-caffeyl aldehyde + NADPH + H(+). It participates in aromatic compound metabolism; phenylpropanoid biosynthesis. Involved in lignin biosynthesis. Catalyzes the final step specific for the production of lignin monomers. Catalyzes the NADPH-dependent reduction of coniferaldehyde, 5-hydroxyconiferaldehyde, sinapaldehyde, 4-coumaraldehyde and caffeyl aldehyde to their respective alcohols. The chain is Probable cinnamyl alcohol dehydrogenase 1 (CAD1) from Eucalyptus gunnii (Cider gum).